We begin with the raw amino-acid sequence, 500 residues long: Na(+)/H(+) antiporter NhaB (500 aa).

Helical transmembrane passes span 11-31, 34-54, 58-78, 96-116, 129-149, 150-170, 205-225, 241-261, 311-331, 350-370, 394-414, 450-470, and 477-497; these read HGFL…FLVL, LLLV…EFIF, MALK…ALLL, VILL…LLLF, AILS…LDAL, TVTA…HRVA, LLMH…VGEP, FFFK…LTCV, ILII…LMVI, FQDA…VAVI, MLYL…VATI, ATPN…APLI, and MVWM…WAVT.

It belongs to the NhaB Na(+)/H(+) (TC 2.A.34) antiporter family.

It localises to the cell inner membrane. It carries out the reaction 2 Na(+)(in) + 3 H(+)(out) = 2 Na(+)(out) + 3 H(+)(in). Na(+)/H(+) antiporter that extrudes sodium in exchange for external protons. This is Na(+)/H(+) antiporter NhaB from Pseudomonas putida (strain GB-1).